A 144-amino-acid polypeptide reads, in one-letter code: MFLNTIQPAVGATHAGRRVGRGIGSGLGKTGGRGHKGQKSRSGGFHKVGFEGGQMPLQRRLPKRGFKSLTASANAQLRLSELESIAVNEIDILVLKQAGLIASTVSNVKVIASGEISKAVALKGIKVTKGARAAIEAVGGKIEM.

The segment at 20 to 49 (GRGIGSGLGKTGGRGHKGQKSRSGGFHKVG) is disordered. Residues 21–31 (RGIGSGLGKTG) show a composition bias toward gly residues.

Belongs to the universal ribosomal protein uL15 family. Part of the 50S ribosomal subunit.

In terms of biological role, binds to the 23S rRNA. This chain is Large ribosomal subunit protein uL15, found in Neisseria meningitidis serogroup C (strain 053442).